Consider the following 327-residue polypeptide: Probable cell division protein WhiA (327 aa).

The segment at residues 275 to 308 (SLEELGQLADPPMTKDAVAGRIRRLLSMADRRAR) is a DNA-binding region (H-T-H motif).

This sequence belongs to the WhiA family.

In terms of biological role, involved in cell division and chromosome segregation. The chain is Probable cell division protein WhiA from Nocardia farcinica (strain IFM 10152).